Reading from the N-terminus, the 479-residue chain is Poly(A) polymerase catalytic subunit (479 aa).

Catalysis depends on residues D202 and D204. Ca(2+)-binding residues include D202, D204, and D253.

It belongs to the poxviridae poly(A) polymerase catalytic subunit family. Heterodimer of a large (catalytic) subunit and a small (regulatory) subunit.

It catalyses the reaction RNA(n) + ATP = RNA(n)-3'-adenine ribonucleotide + diphosphate. In terms of biological role, polymerase that creates the 3'-poly(A) tail of mRNA's. In Homo sapiens (Human), this protein is Poly(A) polymerase catalytic subunit (OPG063).